A 280-amino-acid chain; its full sequence is Hydroxyethylthiazole kinase (280 aa).

M50 serves as a coordination point for substrate. ATP-binding residues include K125 and T178. G205 contributes to the substrate binding site.

The protein belongs to the Thz kinase family. It depends on Mg(2+) as a cofactor.

The catalysed reaction is 5-(2-hydroxyethyl)-4-methylthiazole + ATP = 4-methyl-5-(2-phosphooxyethyl)-thiazole + ADP + H(+). Its pathway is cofactor biosynthesis; thiamine diphosphate biosynthesis; 4-methyl-5-(2-phosphoethyl)-thiazole from 5-(2-hydroxyethyl)-4-methylthiazole: step 1/1. Its function is as follows. Catalyzes the phosphorylation of the hydroxyl group of 4-methyl-5-beta-hydroxyethylthiazole (THZ). This Lacticaseibacillus paracasei (strain ATCC 334 / BCRC 17002 / CCUG 31169 / CIP 107868 / KCTC 3260 / NRRL B-441) (Lactobacillus paracasei) protein is Hydroxyethylthiazole kinase.